The sequence spans 543 residues: Probable protein kinase UbiB (543 aa).

One can recognise a Protein kinase domain in the interval 123 to 501 (DFDIVPLASA…KRQQAKGQFL (379 aa)). Residues 129-137 (LASASIAQV) and K152 each bind ATP. Residue D287 is the Proton acceptor of the active site. Residues 517–539 (TSNITALASISAATGVTFWLLSW) traverse the membrane as a helical segment.

It belongs to the ABC1 family. UbiB subfamily.

Its subcellular location is the cell inner membrane. It participates in cofactor biosynthesis; ubiquinone biosynthesis [regulation]. Its function is as follows. Is probably a protein kinase regulator of UbiI activity which is involved in aerobic coenzyme Q (ubiquinone) biosynthesis. The polypeptide is Probable protein kinase UbiB (Aliivibrio salmonicida (strain LFI1238) (Vibrio salmonicida (strain LFI1238))).